Reading from the N-terminus, the 227-residue chain is Cytochrome c oxidase subunit 2 (227 aa).

The Mitochondrial intermembrane segment spans residues 1-14; that stretch reads MAYPMQLGLQDATS. The helical transmembrane segment at 15–45 threads the bilayer; that stretch reads PIMEELLHFHDHTLMIVFLISSLVLYIISLM. The Mitochondrial matrix portion of the chain corresponds to 46–59; the sequence is LTTKLTHTSTMDAQ. Residues 60-87 form a helical membrane-spanning segment; it reads EVETIWTILPAIILIMIALPSLRILYMM. At 88-227 the chain is on the mitochondrial intermembrane side; that stretch reads DEINNPSLTV…HFEKWSASML (140 aa). The Cu cation site is built by H161, C196, E198, C200, H204, and M207. E198 lines the Mg(2+) pocket.

This sequence belongs to the cytochrome c oxidase subunit 2 family. In terms of assembly, component of the cytochrome c oxidase (complex IV, CIV), a multisubunit enzyme composed of 14 subunits. The complex is composed of a catalytic core of 3 subunits MT-CO1, MT-CO2 and MT-CO3, encoded in the mitochondrial DNA, and 11 supernumerary subunits COX4I, COX5A, COX5B, COX6A, COX6B, COX6C, COX7A, COX7B, COX7C, COX8 and NDUFA4, which are encoded in the nuclear genome. The complex exists as a monomer or a dimer and forms supercomplexes (SCs) in the inner mitochondrial membrane with NADH-ubiquinone oxidoreductase (complex I, CI) and ubiquinol-cytochrome c oxidoreductase (cytochrome b-c1 complex, complex III, CIII), resulting in different assemblies (supercomplex SCI(1)III(2)IV(1) and megacomplex MCI(2)III(2)IV(2)). Found in a complex with TMEM177, COA6, COX18, COX20, SCO1 and SCO2. Interacts with TMEM177 in a COX20-dependent manner. Interacts with COX20. Interacts with COX16. The cofactor is Cu cation.

It localises to the mitochondrion inner membrane. The enzyme catalyses 4 Fe(II)-[cytochrome c] + O2 + 8 H(+)(in) = 4 Fe(III)-[cytochrome c] + 2 H2O + 4 H(+)(out). Functionally, component of the cytochrome c oxidase, the last enzyme in the mitochondrial electron transport chain which drives oxidative phosphorylation. The respiratory chain contains 3 multisubunit complexes succinate dehydrogenase (complex II, CII), ubiquinol-cytochrome c oxidoreductase (cytochrome b-c1 complex, complex III, CIII) and cytochrome c oxidase (complex IV, CIV), that cooperate to transfer electrons derived from NADH and succinate to molecular oxygen, creating an electrochemical gradient over the inner membrane that drives transmembrane transport and the ATP synthase. Cytochrome c oxidase is the component of the respiratory chain that catalyzes the reduction of oxygen to water. Electrons originating from reduced cytochrome c in the intermembrane space (IMS) are transferred via the dinuclear copper A center (CU(A)) of subunit 2 and heme A of subunit 1 to the active site in subunit 1, a binuclear center (BNC) formed by heme A3 and copper B (CU(B)). The BNC reduces molecular oxygen to 2 water molecules using 4 electrons from cytochrome c in the IMS and 4 protons from the mitochondrial matrix. This is Cytochrome c oxidase subunit 2 (MT-CO2) from Damaliscus pygargus phillipsi (Blesbok).